The primary structure comprises 556 residues: Solute carrier family 22 member 20 (556 aa).

The Cytoplasmic segment spans residues 1-15; it reads MAFTDLLDALGGVGR. The chain crosses the membrane as a helical span at residues 16 to 36; that stretch reads FQLVYTALLLLPCGLLACHTF. The Extracellular segment spans residues 37–137; it reads LQNFTAAAPP…LVCEARTLRD (101 aa). Asparagine 39, asparagine 54, asparagine 61, and asparagine 96 each carry an N-linked (GlcNAc...) asparagine glycan. The chain crosses the membrane as a helical span at residues 138 to 158; that stretch reads LAQSIYMSGVLVGAALFGGLA. Residues 159 to 166 lie on the Cytoplasmic side of the membrane; sequence DRLGRKAP. A helical membrane pass occupies residues 167-187; it reads LVWSYLQLAVSGAATAYVGSF. At 188–194 the chain is on the extracellular side; it reads SAYCVFR. The chain crosses the membrane as a helical span at residues 195–215; it reads FLMGMTFSGIILNSLSLVVEW. Residues 216–225 are Cytoplasmic-facing; the sequence is MPTRGRTVAG. Residues 226 to 246 form a helical membrane-spanning segment; sequence ILLGFSFTLGQLILAGVAYLI. The Extracellular segment spans residues 247–250; that stretch reads RPWR. A helical transmembrane segment spans residues 251–271; sequence WLQFAVSAPFLVFFLYSWWLP. Over 272–339 the chain is Cytoplasmic; it reads ESSRWLLLHG…DLFRTPAIRR (68 aa). Residues 340–360 form a helical membrane-spanning segment; that stretch reads VTCCLMGVWFSNSVAYYGLAM. The Extracellular segment spans residues 361 to 366; the sequence is DLQKFG. Residues 367 to 387 form a helical membrane-spanning segment; sequence LSIYLVQALFGIIDIPAMLVA. Over 388–397 the chain is Cytoplasmic; that stretch reads TTTMIYVGRR. A helical transmembrane segment spans residues 398 to 418; that stretch reads ATVSSFLILAGLMVIANMFMP. Topologically, residues 419 to 425 are extracellular; it reads EDLQTLR. Residues 426–446 form a helical membrane-spanning segment; sequence TVQAALGKGCLASSFICVYLF. Residues 447–457 lie on the Cytoplasmic side of the membrane; the sequence is TGELYPTEIRQ. A helical membrane pass occupies residues 458–478; sequence MGMGFASVNARLGGLVAPLIT. Topologically, residues 479 to 485 are extracellular; that stretch reads TLGEISP. A helical membrane pass occupies residues 486–506; it reads VLPPVSFGATSVLAGMAVACF. At 507-556 the chain is on the cytoplasmic side; it reads LTETRNVPLVETIAAMERRVKQGRSKRDTEQKSEEISLQQLGASPLKETI. A compositionally biased stretch (basic and acidic residues) spans 526 to 541; the sequence is VKQGRSKRDTEQKSEE. The segment at 526–556 is disordered; the sequence is VKQGRSKRDTEQKSEEISLQQLGASPLKETI.

It belongs to the major facilitator (TC 2.A.1) superfamily. Organic cation transporter (TC 2.A.1.19) family. As to expression, highly expressed in olfactory mucosa. Weakly expressed in testis. Not detected in heart, spleen, lung, kidney or brain.

The protein resides in the membrane. In terms of biological role, organic anion transporter that mediates the uptake of estrone sulfate. Inhibited by probenecid, propionate, 2-methylbutyrate, 3-methylbutyrate, benzoate, heptanoate and 2-ethylhaxanoate. May act as an odorant transporter. The polypeptide is Solute carrier family 22 member 20 (Slc22a20) (Mus musculus (Mouse)).